The sequence spans 103 residues: Cell division protein FtsB (103 aa).

Residues 1–3 (MGK) are Cytoplasmic-facing. The helical transmembrane segment at 4–21 (LTLLLLAILVWLQYSLWF) threads the bilayer. Topologically, residues 22–103 (GKNGIHDYTR…RAQSAGQNNR (82 aa)) are periplasmic. Positions 31 to 71 (RVNDDVAAQQATNAKLKARNDQLFAEIDDLNGGQEALEERA) form a coiled coil.

It belongs to the FtsB family. As to quaternary structure, part of a complex composed of FtsB, FtsL and FtsQ.

It localises to the cell inner membrane. In terms of biological role, essential cell division protein. May link together the upstream cell division proteins, which are predominantly cytoplasmic, with the downstream cell division proteins, which are predominantly periplasmic. In Shigella boydii serotype 18 (strain CDC 3083-94 / BS512), this protein is Cell division protein FtsB.